We begin with the raw amino-acid sequence, 125 residues long: Large ribosomal subunit protein bL12 (125 aa).

Belongs to the bacterial ribosomal protein bL12 family. As to quaternary structure, homodimer. Part of the ribosomal stalk of the 50S ribosomal subunit. Forms a multimeric L10(L12)X complex, where L10 forms an elongated spine to which 2 to 4 L12 dimers bind in a sequential fashion. Binds GTP-bound translation factors.

Its function is as follows. Forms part of the ribosomal stalk which helps the ribosome interact with GTP-bound translation factors. Is thus essential for accurate translation. The chain is Large ribosomal subunit protein bL12 from Helicobacter pylori (strain ATCC 700392 / 26695) (Campylobacter pylori).